The sequence spans 419 residues: Putative trans-acting enoyl reductase MT2525 (419 aa).

An Isoglutamyl lysine isopeptide (Lys-Gln) (interchain with Q-Cter in protein Pup) cross-link involves residue K127. The tract at residues 197–232 (NDPDARRQLSDPYMLSPDRGAEPELGPQPDLPSRRG) is disordered. Residues 284 to 304 (VLAPVVSVVGGGVGNAMFGLA) traverse the membrane as a helical segment.

This sequence belongs to the saccharopine dehydrogenase family. Enoyl reductase subfamily.

It localises to the cell membrane. The protein is Putative trans-acting enoyl reductase MT2525 of Mycobacterium tuberculosis (strain CDC 1551 / Oshkosh).